Consider the following 222-residue polypeptide: Peptide methionine sulfoxide reductase MsrA (222 aa).

The active site involves C60.

The protein belongs to the MsrA Met sulfoxide reductase family.

The catalysed reaction is L-methionyl-[protein] + [thioredoxin]-disulfide + H2O = L-methionyl-(S)-S-oxide-[protein] + [thioredoxin]-dithiol. It carries out the reaction [thioredoxin]-disulfide + L-methionine + H2O = L-methionine (S)-S-oxide + [thioredoxin]-dithiol. Has an important function as a repair enzyme for proteins that have been inactivated by oxidation. Catalyzes the reversible oxidation-reduction of methionine sulfoxide in proteins to methionine. The protein is Peptide methionine sulfoxide reductase MsrA of Pseudomonas putida (strain W619).